Here is a 411-residue protein sequence, read N- to C-terminus: S-inosyl-L-homocysteine hydrolase (411 aa).

Substrate is bound by residues D121 and E146. Position 147–149 (147–149 (TTT)) interacts with NAD(+). The substrate site is built by K176 and D180. NAD(+) is bound by residues N181, 210–215 (GYGWCG), E233, N268, 289–291 (SGH), and N335.

Belongs to the adenosylhomocysteinase family. NAD(+) serves as cofactor.

The protein resides in the cytoplasm. The enzyme catalyses S-inosyl-L-homocysteine + H2O = L-homocysteine + inosine. The protein operates within amino-acid biosynthesis; S-adenosyl-L-methionine biosynthesis. Catalyzes the hydrolysis of S-inosyl-L-homocysteine (SIH) to L-homocysteine (Hcy) and inosine. Likely functions in a S-adenosyl-L-methionine (SAM) recycling pathway from S-adenosyl-L-homocysteine (SAH) produced from SAM-dependent methylation reactions. Can also catalyze the reverse reaction in vitro, i.e. the synthesis of SIH from Hcy and inosine. This chain is S-inosyl-L-homocysteine hydrolase, found in Methanosarcina mazei (strain ATCC BAA-159 / DSM 3647 / Goe1 / Go1 / JCM 11833 / OCM 88) (Methanosarcina frisia).